The chain runs to 216 residues: Protein-L-isoaspartate O-methyltransferase (216 aa).

Ser62 is a catalytic residue.

Belongs to the methyltransferase superfamily. L-isoaspartyl/D-aspartyl protein methyltransferase family.

It is found in the cytoplasm. It carries out the reaction [protein]-L-isoaspartate + S-adenosyl-L-methionine = [protein]-L-isoaspartate alpha-methyl ester + S-adenosyl-L-homocysteine. Catalyzes the methyl esterification of L-isoaspartyl residues in peptides and proteins that result from spontaneous decomposition of normal L-aspartyl and L-asparaginyl residues. It plays a role in the repair and/or degradation of damaged proteins. This chain is Protein-L-isoaspartate O-methyltransferase, found in Methanospirillum hungatei JF-1 (strain ATCC 27890 / DSM 864 / NBRC 100397 / JF-1).